Reading from the N-terminus, the 644-residue chain is (E2-independent) E3 ubiquitin-conjugating enzyme FATS (644 aa).

The interval Met1 to Gln67 is required for interaction with p53/TP53. 4 disordered regions span residues Thr62–Gly83, Leu305–Thr349, Val367–Ser413, and Asn475–Tyr507. The tract at residues Gln67–Val175 is required for interaction with HDAC1. Over residues Glu398–Ser410 the composition is skewed to low complexity. A compositionally biased stretch (pro residues) spans Thr481–Ser492. The ALMS motif stretch occupies residues Thr516 to Val644. Positions Lys598–Val629 form a coiled coil.

As to quaternary structure, interacts with HDAC1; the interaction prevents binding of HDAC1 to CDKN1A/p21 and facilitates the acetylation and stabilization of CDKN1A/p21. Interacts with p53/TP53; the interaction inhibits binding of p53/TP53 and MDM2. Highly expressed in testis. Weak expression found in brain, lung, heart, ovary, thymus, spleen and kidney.

It is found in the cytoplasm. It localises to the cytoskeleton. The protein localises to the microtubule organizing center. Its subcellular location is the centrosome. In terms of biological role, tumor suppressor that is required to sustain G2/M checkpoint after DNA damage. Acts as a p53/TP53 activator by inhibiting MDM2 binding to p53/TP53 and stimulating non-proteolytic polyubiquitination of p53/TP53. Exhibits ubiquitin ligase (E3) activity and assemble ubiquitin polymers through 'Lys-11'- (K11-), 'Lys-29'- (K29-) and 'Lys-63'- (K63)-linkages, independently of the ubiquitin-conjugating enzyme (E2). Promotes p53/TP53-dependent transcription of CDKN1A/p21, leading to robust checkpoint response. Mediates CDKN1A/p21 protein stability in a ubiquitin-independent manner. Interacts with HDAC1 and prevents binding of HDAC1 to CDKN1A/p21 and facilitates the acetylation and stabilization of CDKN1A/p21. May have a role in the assembly of primary cilia. This is (E2-independent) E3 ubiquitin-conjugating enzyme FATS from Mus musculus (Mouse).